A 537-amino-acid polypeptide reads, in one-letter code: Probable protein kinase UbiB (537 aa).

A helical transmembrane segment spans residues 24 to 44 (LLFEQPLLPWWLASLRLLMPW). The Protein kinase domain maps to 126–494 (RFDVEPLASA…RRRQGDNWAL (369 aa)). ATP contacts are provided by residues 132–140 (LASASVAQV) and Lys154. Residue Asp289 is the Proton acceptor of the active site. Helical transmembrane passes span 493–513 (ALRL…AGAV) and 515–535 (LSAP…YLIV).

It belongs to the ABC1 family. UbiB subfamily.

It localises to the cell inner membrane. The protein operates within cofactor biosynthesis; ubiquinone biosynthesis [regulation]. Its function is as follows. Is probably a protein kinase regulator of UbiI activity which is involved in aerobic coenzyme Q (ubiquinone) biosynthesis. The sequence is that of Probable protein kinase UbiB from Pseudomonas entomophila (strain L48).